A 364-amino-acid polypeptide reads, in one-letter code: MLRRLNSPTAILVRTASTRTEKLEEIRDRLSKGPNFQDFIQNSDNSKDDFENYDGKLRREKGETQQLRLPPWLKTTIPMGKNYAKIKSQLRDLKLSTVCEEARCPNIGECWGGGEHGTQTATIMLMGDTCTRGCRFCSVKTARAPPPLDVNEPVNTAKAISSWGLDYIVLTSVDRDDLPDGGSKHIAETVREIKARNSNIFVECLVPDFRGNLECVQTIAGCGLDVYAHNIETVEKLTPFVRDRRAHYRQTLKVLNEAKQFNPNLITKSSLMLGLGETDAEVEQTMLDLREAGVECLTLGQYMQPTKRHLKVIEYVTPEKFKHWEQRGNELGFLYTASGPLVRSSYKAGEFFITSILANRRKSV.

The segment at 34-53 (PNFQDFIQNSDNSKDDFENY) is disordered. Residues cysteine 99, cysteine 104, cysteine 110, cysteine 130, cysteine 134, cysteine 137, and serine 345 each coordinate [4Fe-4S] cluster. The region spanning 115–334 (EHGTQTATIM…EQRGNELGFL (220 aa)) is the Radical SAM core domain.

The protein belongs to the radical SAM superfamily. Lipoyl synthase family. The cofactor is [4Fe-4S] cluster.

The protein localises to the mitochondrion. It catalyses the reaction [[Fe-S] cluster scaffold protein carrying a second [4Fe-4S](2+) cluster] + N(6)-octanoyl-L-lysyl-[protein] + 2 oxidized [2Fe-2S]-[ferredoxin] + 2 S-adenosyl-L-methionine + 4 H(+) = [[Fe-S] cluster scaffold protein] + N(6)-[(R)-dihydrolipoyl]-L-lysyl-[protein] + 4 Fe(3+) + 2 hydrogen sulfide + 2 5'-deoxyadenosine + 2 L-methionine + 2 reduced [2Fe-2S]-[ferredoxin]. It participates in protein modification; protein lipoylation via endogenous pathway; protein N(6)-(lipoyl)lysine from octanoyl-[acyl-carrier-protein]: step 2/2. Its function is as follows. Catalyzes the radical-mediated insertion of two sulfur atoms into the C-6 and C-8 positions of the octanoyl moiety bound to the lipoyl domains of lipoate-dependent enzymes, thereby converting the octanoylated domains into lipoylated derivatives. This is Lipoyl synthase, mitochondrial from Drosophila grimshawi (Hawaiian fruit fly).